The sequence spans 439 residues: Probable threonine protease PRSS50 (439 aa).

Disordered regions lie at residues 1 to 22 and 48 to 130; these read MEPW…VPGA and ERIR…TMAP. The signal sequence occupies residues 1–47; that stretch reads MEPWCGAEVRGQGPQGPRVPGASRSRSRALLLLLLLLLLLLPRRPAG. Residues 9 to 21 are compositionally biased toward low complexity; sequence VRGQGPQGPRVPG. Residues 48-415 lie on the Extracellular side of the membrane; sequence ERIRPRRPPR…WIWDRLSGEP (368 aa). The segment covering 51–61 has biased composition (basic residues); the sequence is RPRRPPRHAHP. Residues 112-127 are compositionally biased toward low complexity; sequence QAQTNQTTTAPPNSQT. Residues Asn116 and Asn187 are each glycosylated (N-linked (GlcNAc...) asparagine). Residues 157 to 412 form the Peptidase S1 domain; the sequence is FCGSSHEPDP…YRPWIWDRLS (256 aa). The cysteines at positions 192 and 208 are disulfide-linked. The active-site Charge relay system is the His207. Asn226 carries an N-linked (GlcNAc...) asparagine glycan. The active-site Charge relay system is the Asp260. Cystine bridges form between Cys294/Cys370, Cys327/Cys350, and Cys360/Cys388. Catalysis depends on Thr364, which acts as the Charge relay system. Residues 416-436 form a helical membrane-spanning segment; it reads LALPAPSRTLLLAFLLLLILL. The Cytoplasmic portion of the chain corresponds to 437–439; it reads GTL.

Belongs to the peptidase S1 family.

The protein localises to the membrane. May be involved in proteolysis through its threonine endopeptidase activity. The chain is Probable threonine protease PRSS50 (Prss50) from Mus musculus (Mouse).